The primary structure comprises 68 residues: P21 prophage-derived head-stabilizing protein (68 aa).

This sequence belongs to the lambda phage gpW family.

This is P21 prophage-derived head-stabilizing protein from Escherichia coli O6:H1 (strain CFT073 / ATCC 700928 / UPEC).